A 277-amino-acid polypeptide reads, in one-letter code: Release factor glutamine methyltransferase (277 aa).

Residues 120–124 (GTGSG), Asp-143, Trp-171, and Asn-186 contribute to the S-adenosyl-L-methionine site. 186 to 189 (NPPY) provides a ligand contact to substrate.

This sequence belongs to the protein N5-glutamine methyltransferase family. PrmC subfamily.

It carries out the reaction L-glutaminyl-[peptide chain release factor] + S-adenosyl-L-methionine = N(5)-methyl-L-glutaminyl-[peptide chain release factor] + S-adenosyl-L-homocysteine + H(+). Functionally, methylates the class 1 translation termination release factors RF1/PrfA and RF2/PrfB on the glutamine residue of the universally conserved GGQ motif. The protein is Release factor glutamine methyltransferase of Coxiella burnetii (strain RSA 493 / Nine Mile phase I).